Here is a 460-residue protein sequence, read N- to C-terminus: ATP synthase subunit beta (460 aa).

150–157 (GGAGVGKT) contacts ATP.

Belongs to the ATPase alpha/beta chains family. F-type ATPases have 2 components, CF(1) - the catalytic core - and CF(0) - the membrane proton channel. CF(1) has five subunits: alpha(3), beta(3), gamma(1), delta(1), epsilon(1). CF(0) has three main subunits: a(1), b(2) and c(9-12). The alpha and beta chains form an alternating ring which encloses part of the gamma chain. CF(1) is attached to CF(0) by a central stalk formed by the gamma and epsilon chains, while a peripheral stalk is formed by the delta and b chains.

Its subcellular location is the cell inner membrane. The enzyme catalyses ATP + H2O + 4 H(+)(in) = ADP + phosphate + 5 H(+)(out). Produces ATP from ADP in the presence of a proton gradient across the membrane. The catalytic sites are hosted primarily by the beta subunits. The protein is ATP synthase subunit beta of Salmonella paratyphi A (strain ATCC 9150 / SARB42).